The primary structure comprises 581 residues: AP2-like ethylene-responsive transcription factor AIL6 (581 aa).

Disordered stretches follow at residues 105 to 132 (VRYS…HHNQ) and 205 to 240 (NNTN…TDSE). 2 stretches are compositionally biased toward low complexity: residues 108–122 (SDNS…SLTQ) and 218–232 (RGNN…NNNN). 2 consecutive DNA-binding regions (AP2/ERF) follow at residues 268 to 331 (IYRG…TNFP) and 367 to 425 (IYRG…TNFE).

Belongs to the AP2/ERF transcription factor family. AP2 subfamily. Expressed in roots, seedlings, hypocotyl, inflorescence, siliques, and pistils. Also detected at low levels in leaves.

It is found in the nucleus. Probably acts as a transcriptional activator. Binds to the GCC-box pathogenesis-related promoter element. May be involved in the regulation of gene expression by stress factors and by components of stress signal transduction pathways. This is AP2-like ethylene-responsive transcription factor AIL6 from Arabidopsis thaliana (Mouse-ear cress).